A 705-amino-acid chain; its full sequence is Translation initiation factor IF-2 (705 aa).

A disordered region spans residues 40 to 124; sequence DDQIKALDKK…QPAAPKEIPS (85 aa). A compositionally biased stretch (basic and acidic residues) spans 41–58; it reads DQIKALDKKFKKEQKNDN. Low complexity predominate over residues 59 to 77; it reads KQSTQNNHQKSNNQNQNKG. A compositionally biased stretch (basic residues) spans 94–108; sequence KGNKKNNRNNKKNNK. The region spanning 207–376 is the tr-type G domain; that stretch reads ERPAVVTIMG…GLVAEVQELK (170 aa). The tract at residues 216–223 is G1; sequence GHVDHGKT. Position 216-223 (216-223) interacts with GTP; it reads GHVDHGKT. Positions 241-245 are G2; sequence GITQH. Residues 262–265 form a G3 region; sequence DTPG. GTP is bound by residues 262-266 and 316-319; these read DTPGH and NKID. Positions 316 to 319 are G4; it reads NKID. The interval 352 to 354 is G5; it reads SAL.

The protein belongs to the TRAFAC class translation factor GTPase superfamily. Classic translation factor GTPase family. IF-2 subfamily.

The protein resides in the cytoplasm. One of the essential components for the initiation of protein synthesis. Protects formylmethionyl-tRNA from spontaneous hydrolysis and promotes its binding to the 30S ribosomal subunits. Also involved in the hydrolysis of GTP during the formation of the 70S ribosomal complex. This Staphylococcus aureus (strain Mu3 / ATCC 700698) protein is Translation initiation factor IF-2.